A 992-amino-acid polypeptide reads, in one-letter code: MTTDNHQNDSVLDQQSGERTIDESNSISDENNVDNKREDVNVTSPTKSVSCISQAENGVASRTDESTITGSATDAETGDDDDDDDDDDDEDEDDEDEPPLLKYTRISQLPKNFFQRDSISSCLFGDTFFAFGTHSGILHLTTCAFEPIKTIKCHRSSILCINTDGKYFATGSIDGTVIIGSMDDPQNITQYDFKRPINSVALHSNFQASRMFVSGGMAGDVVLSQRNWLGNRIDIVLNKKKKKKTRKDDLSSDMKGPIMGIYTMGDLILWMDDDGITFCDVPTRSQLLNIPFPSRIFNVQDVRPDLFRPHVHFLESDRVVIGWGSNIWLFKVSFTKDSNSIKSGDSNSQSNNMSHFNPTTNIGSLLSSAASSFRGTPDKKVELECHFTVSMLITGLASFKDDQLLCLGFDIDIEEEATIDEDMKEGKNFSKRPENLLAKGNAPELKIVDLFNGDEIYNDEVIMKNYEKLSINDYHLGKHIDKTTPEYYLISSNDAIRVQELSLKDHFDWFMERKQYYKAWKIGKYVIGSEERFSIGLKFLNSLVTKKDWGTLVDHLNIIFEETLNSLDSNSYDVTQNVLKEWADIIEILITSGNIVEIAPLIPKKPALRKSVYDDVLHYFLANDMINKFHEYITKWDLKLFSVEDFEEELETRIEAASEPTASSKEEGSNITYRTELVHLYLKENKYTKAIPHLLKAKDLRALTIIKIQNLLPQYLDQIVDIILLPYKGEISHISKLSIFEIQTIFNKPIDLLFENRHTISVARIYEIFEHDCPKSFKKILFCYLIKFLDTDDSFMISPYENQLIELYSEYDRQSLLPFLQKHNNYNVESAIEVCSSKLGLYNELIYLWGKIGETKKALSLIIDELKNPQLAIDFVKNWGDSELWEFMINYSLDKPNFTKAILTCSDETSEIYLKVIRGMSDDLQIDNLQDIIKHIVQENSLSLEVRDNILVIINDETKKFANEFLKIRSQGKLFQVDESDIEINDDLNGVL.

Polar residues-rich tracts occupy residues 1-30 (MTTD…ISDE) and 41-56 (NVTS…SQAE). Residues 1 to 100 (MTTDNHQNDS…DEDDEDEPPL (100 aa)) are disordered. S26 and S53 each carry phosphoserine. Over residues 76–98 (ETGDDDDDDDDDDDEDEDDEDEP) the composition is skewed to acidic residues. 5 WD repeats span residues 114–152 (FQRD…KTIK), 153–192 (CHRS…TQYD), 194–234 (KRPI…NRID), 240–280 (KKKK…TFCD), and 324–366 (GSNI…GSLL). One copy of the CHCR repeat lies at 753–901 (LFENRHTISV…SLDKPNFTKA (149 aa)).

This sequence belongs to the VPS41 family. As to quaternary structure, component of the HOPS complex which is composed of PEP5, VPS16, PEP3, VPS33, VPS39 and VPS41. HOPS associates with phosphoinositides and the PX domain of VAM7. Interacts with VAM7 and VPS39.

It is found in the vacuole. Required for vacuolar assembly and vacuolar traffic. Acts as component of the HOPS complex that acts during the docking stage of vacuole fusion. HOPS is an effector for the vacuolar Rab GTPase YPT7 and is required for vacuolar SNARE complex assembly. It remains bound to SNARE complexes after vacuole fusion. The chain is Vacuolar protein sorting-associated protein 41 (VPS41) from Saccharomyces cerevisiae (strain ATCC 204508 / S288c) (Baker's yeast).